We begin with the raw amino-acid sequence, 144 residues long: Necrosis-inducing secreted protein 1 (144 aa).

Residues 1-19 form the signal peptide; it reads MQFRASIAAAAGLFALANA. N-linked (GlcNAc...) asparagine glycosylation is found at asparagine 88, asparagine 126, and asparagine 133. A BAK1/SERK3-binding region spans residues 103-132; that stretch reads QYVVAAGLYSLYGASSSPTLSHYNVTVTVG.

It belongs to the NIS1 effector family.

It is found in the secreted. Its subcellular location is the host cytoplasm. In terms of biological role, secreted effector that induces necrotic lesions in Nicotiana benthamiana. Interacts with the host receptor-like kinases (RLKs) BAK1/SERK3 and BKK1/SERK4, inhibits their kinase activity and suppresses INF1-induced pathogen-associated molecular pattern (PAMP)-triggered immunity (PTI) in N.benthamiana. Also interacts with the host receptor-like cytoplasmic kinase (RLCK) BIK1 and inhibits its kinase activity, thereby inhibiting PAMP-induced ROS generation. In PTI, phosphorylation relaying by RLKs and RLCKs is critical for the initiation of downstream signaling. The chain is Necrosis-inducing secreted protein 1 from Colletotrichum higginsianum (strain IMI 349063) (Crucifer anthracnose fungus).